The following is a 288-amino-acid chain: 4-diphosphocytidyl-2-C-methyl-D-erythritol kinase (288 aa).

K11 is a catalytic residue. 100-110 (PIAAGLGSGSS) serves as a coordination point for ATP. The active site involves D140.

This sequence belongs to the GHMP kinase family. IspE subfamily.

The enzyme catalyses 4-CDP-2-C-methyl-D-erythritol + ATP = 4-CDP-2-C-methyl-D-erythritol 2-phosphate + ADP + H(+). The protein operates within isoprenoid biosynthesis; isopentenyl diphosphate biosynthesis via DXP pathway; isopentenyl diphosphate from 1-deoxy-D-xylulose 5-phosphate: step 3/6. Its function is as follows. Catalyzes the phosphorylation of the position 2 hydroxy group of 4-diphosphocytidyl-2C-methyl-D-erythritol. This Wolbachia sp. subsp. Drosophila simulans (strain wRi) protein is 4-diphosphocytidyl-2-C-methyl-D-erythritol kinase.